We begin with the raw amino-acid sequence, 274 residues long: NH(3)-dependent NAD(+) synthetase (274 aa).

Residue 46 to 53 (GISGGQDS) coordinates ATP. Aspartate 52 lines the Mg(2+) pocket. Arginine 140 contacts deamido-NAD(+). Threonine 160 serves as a coordination point for ATP. Glutamate 165 contacts Mg(2+). Residues lysine 173 and aspartate 180 each coordinate deamido-NAD(+). The ATP site is built by lysine 189 and threonine 211. Position 260 to 261 (260 to 261 (HK)) interacts with deamido-NAD(+).

The protein belongs to the NAD synthetase family. Homodimer.

The catalysed reaction is deamido-NAD(+) + NH4(+) + ATP = AMP + diphosphate + NAD(+) + H(+). It functions in the pathway cofactor biosynthesis; NAD(+) biosynthesis; NAD(+) from deamido-NAD(+) (ammonia route): step 1/1. Its function is as follows. Catalyzes the ATP-dependent amidation of deamido-NAD to form NAD. Uses ammonia as a nitrogen source. The sequence is that of NH(3)-dependent NAD(+) synthetase from Streptococcus pneumoniae serotype 19F (strain G54).